A 904-amino-acid polypeptide reads, in one-letter code: Alanine--tRNA ligase (904 aa).

His-594, His-598, Cys-695, and His-699 together coordinate Zn(2+).

This sequence belongs to the class-II aminoacyl-tRNA synthetase family. The cofactor is Zn(2+).

It is found in the cytoplasm. It carries out the reaction tRNA(Ala) + L-alanine + ATP = L-alanyl-tRNA(Ala) + AMP + diphosphate. In terms of biological role, catalyzes the attachment of alanine to tRNA(Ala) in a two-step reaction: alanine is first activated by ATP to form Ala-AMP and then transferred to the acceptor end of tRNA(Ala). Also edits incorrectly charged Ser-tRNA(Ala) and Gly-tRNA(Ala) via its editing domain. The protein is Alanine--tRNA ligase of Anaeromyxobacter sp. (strain Fw109-5).